The following is a 307-amino-acid chain: UDP-3-O-acyl-N-acetylglucosamine deacetylase (307 aa).

Zn(2+) contacts are provided by histidine 80, histidine 239, and aspartate 243. Catalysis depends on histidine 266, which acts as the Proton donor.

Belongs to the LpxC family. It depends on Zn(2+) as a cofactor.

It catalyses the reaction a UDP-3-O-[(3R)-3-hydroxyacyl]-N-acetyl-alpha-D-glucosamine + H2O = a UDP-3-O-[(3R)-3-hydroxyacyl]-alpha-D-glucosamine + acetate. It participates in glycolipid biosynthesis; lipid IV(A) biosynthesis; lipid IV(A) from (3R)-3-hydroxytetradecanoyl-[acyl-carrier-protein] and UDP-N-acetyl-alpha-D-glucosamine: step 2/6. Catalyzes the hydrolysis of UDP-3-O-myristoyl-N-acetylglucosamine to form UDP-3-O-myristoylglucosamine and acetate, the committed step in lipid A biosynthesis. The protein is UDP-3-O-acyl-N-acetylglucosamine deacetylase of Neisseria meningitidis serogroup A / serotype 4A (strain DSM 15465 / Z2491).